Reading from the N-terminus, the 385-residue chain is Lipoyl synthase, mitochondrial (385 aa).

[4Fe-4S] cluster is bound by residues cysteine 107, cysteine 112, cysteine 118, cysteine 137, cysteine 141, cysteine 144, and serine 352. A Radical SAM core domain is found at 122 to 341 (KKSEATATIM…RDTALKMGFL (220 aa)).

This sequence belongs to the radical SAM superfamily. Lipoyl synthase family. [4Fe-4S] cluster serves as cofactor.

The protein resides in the mitochondrion. The enzyme catalyses [[Fe-S] cluster scaffold protein carrying a second [4Fe-4S](2+) cluster] + N(6)-octanoyl-L-lysyl-[protein] + 2 oxidized [2Fe-2S]-[ferredoxin] + 2 S-adenosyl-L-methionine + 4 H(+) = [[Fe-S] cluster scaffold protein] + N(6)-[(R)-dihydrolipoyl]-L-lysyl-[protein] + 4 Fe(3+) + 2 hydrogen sulfide + 2 5'-deoxyadenosine + 2 L-methionine + 2 reduced [2Fe-2S]-[ferredoxin]. Its pathway is protein modification; protein lipoylation via endogenous pathway; protein N(6)-(lipoyl)lysine from octanoyl-[acyl-carrier-protein]: step 2/2. Functionally, catalyzes the radical-mediated insertion of two sulfur atoms into the C-6 and C-8 positions of the octanoyl moiety bound to the lipoyl domains of lipoate-dependent enzymes, thereby converting the octanoylated domains into lipoylated derivatives. In Meyerozyma guilliermondii (strain ATCC 6260 / CBS 566 / DSM 6381 / JCM 1539 / NBRC 10279 / NRRL Y-324) (Yeast), this protein is Lipoyl synthase, mitochondrial.